Consider the following 114-residue polypeptide: Large ribosomal subunit protein uL22 (114 aa).

It belongs to the universal ribosomal protein uL22 family. As to quaternary structure, part of the 50S ribosomal subunit.

Its function is as follows. This protein binds specifically to 23S rRNA; its binding is stimulated by other ribosomal proteins, e.g. L4, L17, and L20. It is important during the early stages of 50S assembly. It makes multiple contacts with different domains of the 23S rRNA in the assembled 50S subunit and ribosome. In terms of biological role, the globular domain of the protein is located near the polypeptide exit tunnel on the outside of the subunit, while an extended beta-hairpin is found that lines the wall of the exit tunnel in the center of the 70S ribosome. The polypeptide is Large ribosomal subunit protein uL22 (Mycoplasmopsis agalactiae (strain NCTC 10123 / CIP 59.7 / PG2) (Mycoplasma agalactiae)).